A 266-amino-acid polypeptide reads, in one-letter code: Putative carbamate hydrolase RutD (266 aa).

The protein belongs to the AB hydrolase superfamily. Hydrolase RutD family.

The enzyme catalyses carbamate + 2 H(+) = NH4(+) + CO2. In terms of biological role, involved in pyrimidine catabolism. May facilitate the hydrolysis of carbamate, a reaction that can also occur spontaneously. The sequence is that of Putative carbamate hydrolase RutD from Escherichia coli O7:K1 (strain IAI39 / ExPEC).